Here is a 316-residue protein sequence, read N- to C-terminus: Pantothenate kinase (316 aa).

ATP is bound at residue 95–102 (GSVAVGKS).

This sequence belongs to the prokaryotic pantothenate kinase family.

The protein localises to the cytoplasm. The enzyme catalyses (R)-pantothenate + ATP = (R)-4'-phosphopantothenate + ADP + H(+). It functions in the pathway cofactor biosynthesis; coenzyme A biosynthesis; CoA from (R)-pantothenate: step 1/5. This chain is Pantothenate kinase, found in Salmonella gallinarum (strain 287/91 / NCTC 13346).